A 283-amino-acid chain; its full sequence is Phosphatidylserine decarboxylase proenzyme (283 aa).

Residues aspartate 96, histidine 152, and serine 250 each act as charge relay system; for autoendoproteolytic cleavage activity in the active site. Catalysis depends on serine 250, which acts as the Schiff-base intermediate with substrate; via pyruvic acid; for decarboxylase activity. Serine 250 bears the Pyruvic acid (Ser); by autocatalysis mark.

The protein belongs to the phosphatidylserine decarboxylase family. PSD-B subfamily. Prokaryotic type I sub-subfamily. Heterodimer of a large membrane-associated beta subunit and a small pyruvoyl-containing alpha subunit. Pyruvate is required as a cofactor. In terms of processing, is synthesized initially as an inactive proenzyme. Formation of the active enzyme involves a self-maturation process in which the active site pyruvoyl group is generated from an internal serine residue via an autocatalytic post-translational modification. Two non-identical subunits are generated from the proenzyme in this reaction, and the pyruvate is formed at the N-terminus of the alpha chain, which is derived from the carboxyl end of the proenzyme. The autoendoproteolytic cleavage occurs by a canonical serine protease mechanism, in which the side chain hydroxyl group of the serine supplies its oxygen atom to form the C-terminus of the beta chain, while the remainder of the serine residue undergoes an oxidative deamination to produce ammonia and the pyruvoyl prosthetic group on the alpha chain. During this reaction, the Ser that is part of the protease active site of the proenzyme becomes the pyruvoyl prosthetic group, which constitutes an essential element of the active site of the mature decarboxylase.

Its subcellular location is the cell membrane. It carries out the reaction a 1,2-diacyl-sn-glycero-3-phospho-L-serine + H(+) = a 1,2-diacyl-sn-glycero-3-phosphoethanolamine + CO2. It functions in the pathway phospholipid metabolism; phosphatidylethanolamine biosynthesis; phosphatidylethanolamine from CDP-diacylglycerol: step 2/2. In terms of biological role, catalyzes the formation of phosphatidylethanolamine (PtdEtn) from phosphatidylserine (PtdSer). This Acinetobacter baumannii (strain ACICU) protein is Phosphatidylserine decarboxylase proenzyme.